The sequence spans 276 residues: Protein FAM151B (276 aa).

Belongs to the menorin family.

Functionally, essential for survival of retinal photoreceptor cells. This chain is Protein FAM151B (FAM151B), found in Homo sapiens (Human).